The following is a 287-amino-acid chain: MDYKFEALVTALVLAVSFIFIYGKFSGAKQSQPAVKTTLNKDWQEFSLLTKTVLTHNTAIYRFGLPEADAVLGLPIGQHISISGVIDGKEMLRSYTPTSLDSDATGYFELLVKSYEKGNISKMLAELAIGDRIKVRGPKGFYHYEPNMYKEIGMIAGGTGISPMYQIIRAIFSNPRDKTRVCLVYGNQTKDDILLKPELDAMVAAKPDQFKILYMLDKVAEGEQWEGKLGYITEAIMREHLPAPSSSAQLLLCGPPPMVSSAKRIAVSLGFEKAKPISKKGDQVFAF.

A helical transmembrane segment spans residues 5-25 (FEALVTALVLAVSFIFIYGKF). Positions 41 to 145 (KDWQEFSLLT…RGPKGFYHYE (105 aa)) constitute an FAD-binding FR-type domain. FAD-binding positions include 125–142 (AELA…KGFY) and 151–183 (EIGM…RVCL).

It belongs to the flavoprotein pyridine nucleotide cytochrome reductase family. In terms of assembly, monomer. Component of the 2-(3-amino-3-carboxypropyl)histidine synthase complex composed of DPH1, DPH2, DPH3 and a NADH-dependent reductase, predominantly CBR1. It depends on FAD as a cofactor.

It is found in the mitochondrion outer membrane. It catalyses the reaction 2 Fe(III)-[cytochrome b5] + NADH = 2 Fe(II)-[cytochrome b5] + NAD(+) + H(+). It carries out the reaction 2 Fe(3+)-[Dph3] + NADH = 2 Fe(2+)-[Dph3] + NAD(+) + H(+). It functions in the pathway protein modification; peptidyl-diphthamide biosynthesis. Functionally, NADH-dependent reductase for DPH3 and cytochrome b5. Required for the first step of diphthamide biosynthesis, a post-translational modification of histidine which occurs in elongation factor 2. DPH1 and DPH2 transfer a 3-amino-3-carboxypropyl (ACP) group from S-adenosyl-L-methionine (SAM) to a histidine residue, the reaction is assisted by a reduction system comprising DPH3 and a NADH-dependent reductase, predominantly CBR1. By reducing DPH3, also involved in the formation of the tRNA wobble base modification mcm5s 2U (5-methoxycarbonylmethyl-2-thiouridine), mediated by the elongator complex. The cytochrome b5/NADH cytochrome b5 reductase electron transfer system supports the catalytic activity of several sterol biosynthetic enzymes. The protein is NADH-cytochrome b5 reductase 1 (CBR1) of Eremothecium gossypii (strain ATCC 10895 / CBS 109.51 / FGSC 9923 / NRRL Y-1056) (Yeast).